We begin with the raw amino-acid sequence, 312 residues long: Glyoxylate/hydroxypyruvate reductase A (312 aa).

Residue Arg227 is part of the active site. His275 (proton donor) is an active-site residue.

Belongs to the D-isomer specific 2-hydroxyacid dehydrogenase family. GhrA subfamily.

It localises to the cytoplasm. The enzyme catalyses glycolate + NADP(+) = glyoxylate + NADPH + H(+). The catalysed reaction is (R)-glycerate + NAD(+) = 3-hydroxypyruvate + NADH + H(+). It catalyses the reaction (R)-glycerate + NADP(+) = 3-hydroxypyruvate + NADPH + H(+). In terms of biological role, catalyzes the NADPH-dependent reduction of glyoxylate and hydroxypyruvate into glycolate and glycerate, respectively. This chain is Glyoxylate/hydroxypyruvate reductase A, found in Klebsiella pneumoniae (strain 342).